A 794-amino-acid chain; its full sequence is EVI5-like protein (794 aa).

Residues 1–30 (MASPTLSPDSSSQEALSAPTCSPTSDSENL) show a composition bias toward polar residues. 2 disordered regions span residues 1-36 (MASPTLSPDSSSQEALSAPTCSPTSDSENLSPDELE) and 49-75 (EADSKSMRSMNGSRRNSGSSLVSSSSA). Low complexity predominate over residues 55–75 (MRSMNGSRRNSGSSLVSSSSA). The 186-residue stretch at 115–300 (GIPHHFRAIV…RVFDIFMYEG (186 aa)) folds into the Rab-GAP TBC domain. 2 coiled-coil regions span residues 358-449 (KKMK…QQEN) and 569-709 (EAQA…LKGP). Ser685 bears the Phosphoserine mark. The interval 766–794 (LERPAKDSEGSSDSDADELAAPYSQGLDN) is disordered.

May interact with RAB10.

Functionally, functions as a GTPase-activating protein (GAP) with a broad specificity. The protein is EVI5-like protein (EVI5L) of Homo sapiens (Human).